Consider the following 188-residue polypeptide: Ribosome-recycling factor (188 aa).

The protein belongs to the RRF family.

The protein resides in the cytoplasm. Functionally, responsible for the release of ribosomes from messenger RNA at the termination of protein biosynthesis. May increase the efficiency of translation by recycling ribosomes from one round of translation to another. This chain is Ribosome-recycling factor, found in Bradyrhizobium diazoefficiens (strain JCM 10833 / BCRC 13528 / IAM 13628 / NBRC 14792 / USDA 110).